A 249-amino-acid polypeptide reads, in one-letter code: 5'-nucleotidase SurE (249 aa).

A divalent metal cation-binding residues include Asp8, Asp9, Ser39, and Asn91.

Belongs to the SurE nucleotidase family. A divalent metal cation is required as a cofactor.

Its subcellular location is the cytoplasm. The catalysed reaction is a ribonucleoside 5'-phosphate + H2O = a ribonucleoside + phosphate. Nucleotidase that shows phosphatase activity on nucleoside 5'-monophosphates. This chain is 5'-nucleotidase SurE, found in Pseudomonas putida (strain ATCC 700007 / DSM 6899 / JCM 31910 / BCRC 17059 / LMG 24140 / F1).